We begin with the raw amino-acid sequence, 410 residues long: LL-diaminopimelate aminotransferase (410 aa).

The substrate site is built by Tyr15 and Gly42. Residues Tyr72, 108 to 109 (SK), Tyr132, Asn187, Tyr218, and 246 to 248 (SFS) each bind pyridoxal 5'-phosphate. 3 residues coordinate substrate: Lys109, Tyr132, and Asn187. Lys249 carries the N6-(pyridoxal phosphate)lysine modification. Positions 257 and 292 each coordinate pyridoxal 5'-phosphate. Residues Asn292 and Arg388 each contribute to the substrate site.

Belongs to the class-I pyridoxal-phosphate-dependent aminotransferase family. LL-diaminopimelate aminotransferase subfamily. In terms of assembly, homodimer. It depends on pyridoxal 5'-phosphate as a cofactor.

It catalyses the reaction (2S,6S)-2,6-diaminopimelate + 2-oxoglutarate = (S)-2,3,4,5-tetrahydrodipicolinate + L-glutamate + H2O + H(+). Its pathway is amino-acid biosynthesis; L-lysine biosynthesis via DAP pathway; LL-2,6-diaminopimelate from (S)-tetrahydrodipicolinate (aminotransferase route): step 1/1. Involved in the synthesis of meso-diaminopimelate (m-DAP or DL-DAP), required for both lysine and peptidoglycan biosynthesis. Catalyzes the direct conversion of tetrahydrodipicolinate to LL-diaminopimelate. This Thermosynechococcus vestitus (strain NIES-2133 / IAM M-273 / BP-1) protein is LL-diaminopimelate aminotransferase.